The sequence spans 51 residues: ATP synthase protein 8 (51 aa).

A helical transmembrane segment spans residues 7–27; the sequence is LNWAMMTIMFSLSLLVSMIIL.

It belongs to the ATPase protein 8 family. F-type ATPases have 2 components, CF(1) - the catalytic core - and CF(0) - the membrane proton channel.

It is found in the mitochondrion membrane. In terms of biological role, mitochondrial membrane ATP synthase (F(1)F(0) ATP synthase or Complex V) produces ATP from ADP in the presence of a proton gradient across the membrane which is generated by electron transport complexes of the respiratory chain. F-type ATPases consist of two structural domains, F(1) - containing the extramembraneous catalytic core and F(0) - containing the membrane proton channel, linked together by a central stalk and a peripheral stalk. During catalysis, ATP synthesis in the catalytic domain of F(1) is coupled via a rotary mechanism of the central stalk subunits to proton translocation. Part of the complex F(0) domain. Minor subunit located with subunit a in the membrane. The protein is ATP synthase protein 8 (MT-ATP8) of Limulus polyphemus (Atlantic horseshoe crab).